Here is a 232-residue protein sequence, read N- to C-terminus: MSQYQNQYGAQTRKTDEYGNPMNQVDQYGNPISGGGGLTGEAGRQHYGTTGGATDHGHGQQHRGVDQTTGYGTHTGGVGGYGTKPEYGSTNTGSGYGTGTGYGGSGTTEYVREEHHGDKKGVMDKIKEKIPGTEQSRTHTDGTGYGSTGYGASGGGIGNTGQEYVREELTVHPGDKKHGSAGQEYVKEERRGIGNTGQEYVREEHRVDHGEKKGIMDKIKEKLPGTGGCTGH.

Residues 1–12 are compositionally biased toward polar residues; that stretch reads MSQYQNQYGAQT. Disordered stretches follow at residues 1–92, 131–156, and 173–232; these read MSQY…STNT, PGTE…SGGG, and PGDK…CTGH. The span at 73–82 shows a compositional bias: gly residues; it reads THTGGVGGYG. Over residues 131–140 the composition is skewed to basic and acidic residues; the sequence is PGTEQSRTHT. A compositionally biased stretch (gly residues) spans 143 to 156; the sequence is TGYGSTGYGASGGG. Basic and acidic residues predominate over residues 200–223; that stretch reads YVREEHRVDHGEKKGIMDKIKEKL.

This sequence belongs to the plant dehydrin family.

The polypeptide is Dehydrin DHN2 (DHN2) (Pisum sativum (Garden pea)).